The following is a 216-amino-acid chain: MISVEHVSKRYLTRQGWRTVLHDISFKMEKGEKIGILGRNGAGKSTLIRLISGVEPPTTGEIKRTMSISWPLAFSGAFQGSLTGMDNLRFICRIYNVDIDYVKAFTEEFSELGQYLYEPVKRYSSGMKARLAFALSLAVEFDCYLIDEVIAVGDSRFADKCKYELFEKRKDRSIILVSHSHSAMKQYCDNAMVLEKGHMYQFEDMDKAYEYYNSLP.

The region spanning 2–215 is the ABC transporter domain; sequence ISVEHVSKRY…DKAYEYYNSL (214 aa). 38-45 is a binding site for ATP; it reads GRNGAGKS.

The protein belongs to the ABC transporter superfamily.

The protein localises to the cell inner membrane. The enzyme catalyses ATP + H2O + capsular polysaccharide-[capsular polysaccharide-binding protein]Side 1 = ADP + phosphate + capsular polysaccharideSide 2 + [capsular polysaccharide-binding protein]Side 1.. Its function is as follows. Putative ATP-binding protein, and an energy-coupling component of capsule polysaccharide export apparatus. The protein is Capsule polysaccharide export ATP-binding protein CtrD (ctrD) of Neisseria meningitidis serogroup B (strain ATCC BAA-335 / MC58).